Here is an 885-residue protein sequence, read N- to C-terminus: Translation initiation factor IF-2 (885 aa).

Disordered regions lie at residues 55-150 (IPDK…ADVT) and 269-300 (NTINSFGEGGIQRRARKKHKKPENKQNSEAVT). Residues 65–146 (EPKAKKEPKK…AEAPKPKESL (82 aa)) show a composition bias toward basic and acidic residues. Over residues 281 to 290 (RRARKKHKKP) the composition is skewed to basic residues. Positions 384–553 (PRAPVITIMG…LLQADLLELK (170 aa)) constitute a tr-type G domain. Positions 393-400 (GHVDHGKT) are G1. Residue 393–400 (GHVDHGKT) coordinates GTP. Positions 418–422 (GITQH) are G2. A G3 region spans residues 439–442 (DTPG). GTP contacts are provided by residues 439 to 443 (DTPGH) and 493 to 496 (NKMD). The tract at residues 493–496 (NKMD) is G4. Residues 529-531 (SAK) form a G5 region.

It belongs to the TRAFAC class translation factor GTPase superfamily. Classic translation factor GTPase family. IF-2 subfamily.

It localises to the cytoplasm. In terms of biological role, one of the essential components for the initiation of protein synthesis. Protects formylmethionyl-tRNA from spontaneous hydrolysis and promotes its binding to the 30S ribosomal subunits. Also involved in the hydrolysis of GTP during the formation of the 70S ribosomal complex. The chain is Translation initiation factor IF-2 from Campylobacter concisus (strain 13826).